The primary structure comprises 489 residues: GTPase Der (489 aa).

EngA-type G domains lie at 30-199 and 227-403; these read PVVS…KDKP and FRLA…SRSH. Residues 36–43, 85–89, 151–154, 233–240, 280–284, and 345–348 contribute to the GTP site; these read GRQNVGKS, DTPGL, NKAD, GKPNSGKS, DTAGI, and NKWD. In terms of domain architecture, KH-like spans 404 to 488; it reads RKVSTSELNK…PIRLEFRSDR (85 aa).

The protein belongs to the TRAFAC class TrmE-Era-EngA-EngB-Septin-like GTPase superfamily. EngA (Der) GTPase family. In terms of assembly, associates with the 50S ribosomal subunit.

GTPase that plays an essential role in the late steps of ribosome biogenesis. The sequence is that of GTPase Der from Leptospira interrogans serogroup Icterohaemorrhagiae serovar copenhageni (strain Fiocruz L1-130).